The chain runs to 146 residues: VEWTQQERSIIAGFIANLNYEDIGPKALARCLIVYPWTQRYFGAYGDLSTPDAIKGNAKIAAHGVKVLHGLDRAVKNMDNINEAYSELSVLHSDKLHVDPDNFRILGDCLTVVIAANLGDAFTVETQCAFQKFLAVVVFALGRKYH.

Residues glutamate 2–histidine 146 form the Globin domain. 2 residues coordinate heme b: histidine 63 and histidine 92.

This sequence belongs to the globin family. As to quaternary structure, heterotetramer of two alpha chains and two beta chains. In terms of tissue distribution, red blood cells.

Its function is as follows. Involved in oxygen transport from gills to the various peripheral tissues. The chain is Hemoglobin subunit beta (hbb) from Thunnus thynnus (Atlantic bluefin tuna).